Here is a 118-residue protein sequence, read N- to C-terminus: Transcription factor PAR1 (118 aa).

Residues 1 to 58 (MEETLATPDATRRSLSPSCSATVKSRAAGFERRTKRRLSETNASVREDREEAEEEEDE) form a disordered region. The span at 13–23 (RSLSPSCSATV) shows a compositional bias: polar residues. Residues 43-92 (ASVREDREEAEEEEDEVKEKIEALQRIIPGGAALGVDALFEETAGYILSL) form the bHLH domain.

This sequence belongs to the bHLH protein family. Homodimer.

The protein localises to the nucleus. Its function is as follows. Atypical bHLH transcription factor that acts as a negative regulator of a variety of shade avoidance syndrome (SAS) responses, including seedling elongation and photosynthetic pigment accumulation. Acts as a direct transcriptional repressor of two auxin-responsive genes, SAUR15 and SAUR68. May function in integrating shade and hormone transcriptional networks in response to light and auxin changes. In Arabidopsis thaliana (Mouse-ear cress), this protein is Transcription factor PAR1 (PAR1).